The chain runs to 261 residues: tRNA 5-carboxymethoxyuridine methyltransferase (261 aa).

Residues Arg-26, 52 to 53 (GG), Asp-73, 102 to 103 (AQ), and His-119 each bind S-adenosyl-L-methionine.

This sequence belongs to the class I-like SAM-binding methyltransferase superfamily. CmoM family.

The enzyme catalyses 5-carboxymethoxyuridine(34) in tRNA + S-adenosyl-L-methionine = 5-methoxycarbonylmethoxyuridine(34) in tRNA + S-adenosyl-L-homocysteine. In terms of biological role, catalyzes the methylation of 5-carboxymethoxyuridine (cmo5U) to form 5-methoxycarbonylmethoxyuridine (mcmo5U) at position 34 in tRNAs. Four tRNAs (tRNA(Ala1), tRNA(Ser1), tRNA(Pro3) and tRNA(Thr4)) are fully modified with mcmo5U in stationary-phase E.coli. Also present at low frequency in tRNA(Leu3) and tRNA(Val1). The protein is tRNA 5-carboxymethoxyuridine methyltransferase of Escherichia coli (strain K12).